Reading from the N-terminus, the 448-residue chain is Tubulin beta chain (448 aa).

Positions 11, 69, 138, 142, 143, 144, 204, and 226 each coordinate GTP. Glu-69 provides a ligand contact to Mg(2+). The interval Ser-429–Glu-448 is disordered. Acidic residues predominate over residues Asp-432–Glu-448.

Belongs to the tubulin family. In terms of assembly, dimer of alpha and beta chains. A typical microtubule is a hollow water-filled tube with an outer diameter of 25 nm and an inner diameter of 15 nM. Alpha-beta heterodimers associate head-to-tail to form protofilaments running lengthwise along the microtubule wall with the beta-tubulin subunit facing the microtubule plus end conferring a structural polarity. Microtubules usually have 13 protofilaments but different protofilament numbers can be found in some organisms and specialized cells. It depends on Mg(2+) as a cofactor.

The protein localises to the cytoplasm. It is found in the cytoskeleton. In terms of biological role, tubulin is the major constituent of microtubules, a cylinder consisting of laterally associated linear protofilaments composed of alpha- and beta-tubulin heterodimers. Microtubules grow by the addition of GTP-tubulin dimers to the microtubule end, where a stabilizing cap forms. Below the cap, tubulin dimers are in GDP-bound state, owing to GTPase activity of alpha-tubulin. This chain is Tubulin beta chain, found in Aspergillus fumigatus (strain ATCC MYA-4609 / CBS 101355 / FGSC A1100 / Af293) (Neosartorya fumigata).